Reading from the N-terminus, the 64-residue chain is MADESKFEQAKGNVKETIGNVTDNKNLENEGKEDKASGKAKEFVENAKEKATDFIDKVKGNKGE.

The disordered stretch occupies residues 1–40; the sequence is MADESKFEQAKGNVKETIGNVTDNKNLENEGKEDKASGKA. Residues 25–40 are compositionally biased toward basic and acidic residues; the sequence is KNLENEGKEDKASGKA.

The protein belongs to the UPF0337 (CsbD) family.

In Staphylococcus aureus (strain bovine RF122 / ET3-1), this protein is UPF0337 protein SAB0772.